The sequence spans 313 residues: 4-hydroxy-3-methylbut-2-enyl diphosphate reductase (313 aa).

Cysteine 14 contacts [4Fe-4S] cluster. Positions 43 and 76 each coordinate (2E)-4-hydroxy-3-methylbut-2-enyl diphosphate. Dimethylallyl diphosphate is bound by residues histidine 43 and histidine 76. Residues histidine 43 and histidine 76 each coordinate isopentenyl diphosphate. Cysteine 98 is a [4Fe-4S] cluster binding site. A (2E)-4-hydroxy-3-methylbut-2-enyl diphosphate-binding site is contributed by histidine 126. Histidine 126 serves as a coordination point for dimethylallyl diphosphate. Histidine 126 contributes to the isopentenyl diphosphate binding site. The active-site Proton donor is the glutamate 128. (2E)-4-hydroxy-3-methylbut-2-enyl diphosphate is bound at residue threonine 166. Cysteine 196 lines the [4Fe-4S] cluster pocket. (2E)-4-hydroxy-3-methylbut-2-enyl diphosphate is bound by residues serine 224, serine 225, asparagine 226, and serine 269. Dimethylallyl diphosphate-binding residues include serine 224, serine 225, asparagine 226, and serine 269. Positions 224, 225, 226, and 269 each coordinate isopentenyl diphosphate.

This sequence belongs to the IspH family. [4Fe-4S] cluster is required as a cofactor.

The enzyme catalyses isopentenyl diphosphate + 2 oxidized [2Fe-2S]-[ferredoxin] + H2O = (2E)-4-hydroxy-3-methylbut-2-enyl diphosphate + 2 reduced [2Fe-2S]-[ferredoxin] + 2 H(+). The catalysed reaction is dimethylallyl diphosphate + 2 oxidized [2Fe-2S]-[ferredoxin] + H2O = (2E)-4-hydroxy-3-methylbut-2-enyl diphosphate + 2 reduced [2Fe-2S]-[ferredoxin] + 2 H(+). The protein operates within isoprenoid biosynthesis; dimethylallyl diphosphate biosynthesis; dimethylallyl diphosphate from (2E)-4-hydroxy-3-methylbutenyl diphosphate: step 1/1. It participates in isoprenoid biosynthesis; isopentenyl diphosphate biosynthesis via DXP pathway; isopentenyl diphosphate from 1-deoxy-D-xylulose 5-phosphate: step 6/6. Its function is as follows. Catalyzes the conversion of 1-hydroxy-2-methyl-2-(E)-butenyl 4-diphosphate (HMBPP) into a mixture of isopentenyl diphosphate (IPP) and dimethylallyl diphosphate (DMAPP). Acts in the terminal step of the DOXP/MEP pathway for isoprenoid precursor biosynthesis. The chain is 4-hydroxy-3-methylbut-2-enyl diphosphate reductase from Tropheryma whipplei (strain TW08/27) (Whipple's bacillus).